Reading from the N-terminus, the 301-residue chain is GTPase Era (301 aa).

The Era-type G domain occupies 4–173 (KAGFVALIGK…LECISQHLSP (170 aa)). Residues 12-19 (GKPNAGKS) form a G1 region. 12–19 (GKPNAGKS) contributes to the GTP binding site. Residues 38-42 (NATRK) form a G2 region. The tract at residues 64-67 (DTPG) is G3. GTP contacts are provided by residues 64-68 (DTPGL) and 122-125 (SKID). Residues 122 to 125 (SKID) form a G4 region. A G5 region spans residues 152 to 154 (LSA). In terms of domain architecture, KH type-2 spans 204 to 280 (LSDEIPYESD…FLNLQVIAQK (77 aa)).

It belongs to the TRAFAC class TrmE-Era-EngA-EngB-Septin-like GTPase superfamily. Era GTPase family. As to quaternary structure, monomer.

The protein resides in the cytoplasm. The protein localises to the cell inner membrane. Its function is as follows. An essential GTPase that binds both GDP and GTP, with rapid nucleotide exchange. Plays a role in 16S rRNA processing and 30S ribosomal subunit biogenesis and possibly also in cell cycle regulation and energy metabolism. The polypeptide is GTPase Era (Helicobacter pylori (strain ATCC 700392 / 26695) (Campylobacter pylori)).